The primary structure comprises 76 residues: Exodeoxyribonuclease 7 small subunit (76 aa).

It belongs to the XseB family. In terms of assembly, heterooligomer composed of large and small subunits.

It is found in the cytoplasm. The enzyme catalyses Exonucleolytic cleavage in either 5'- to 3'- or 3'- to 5'-direction to yield nucleoside 5'-phosphates.. Functionally, bidirectionally degrades single-stranded DNA into large acid-insoluble oligonucleotides, which are then degraded further into small acid-soluble oligonucleotides. The chain is Exodeoxyribonuclease 7 small subunit from Latilactobacillus sakei subsp. sakei (strain 23K) (Lactobacillus sakei subsp. sakei).